The primary structure comprises 608 residues: Afamin (608 aa).

Residues 1–21 (MRHLKLTGFIFFLLPLTESLA) form the signal peptide. Albumin domains follow at residues 22 to 210 (LPTK…APIT), 211 to 403 (QYLK…KFNE), and 404 to 599 (TTQR…KTGD). An N-linked (GlcNAc...) asparagine glycan is attached at N33. 11 cysteine pairs are disulfide-bonded: C77-C86, C99-C114, C113-C124, C148-C193, C192-C201, C224-C270, C269-C277, C289-C303, C302-C313, C340-C385, and C384-C393. An N-linked (GlcNAc...) asparagine glycan is attached at N109. An N-linked (GlcNAc...) asparagine glycan is attached at N153. The binding pocket for hydrophobic ligands stretch occupies residues 215-319 (ASSSYQRNVC…REACIINANK (105 aa)). N402 is a glycosylation site (N-linked (GlcNAc...) asparagine). 5 disulfide bridges follow: C416–C462, C461–C470, C483–C499, C498–C509, and C580–C589. N-linked (GlcNAc...) asparagine glycosylation is present at N488. The disordered stretch occupies residues 583–608 (VQEPESCFSPESSKTGDESQATEKQR). Positions 596-608 (KTGDESQATEKQR) are enriched in basic and acidic residues.

It belongs to the ALB/AFP/VDB family. In terms of assembly, forms a 1:1 complex with Wnt family members; interacts with WNT1, WNT2B, WNT3, WNT5A, WNT7A, WNT7B, WNT8, WNT9A, WNT9B, WNT10A and WNT10B. Interacts with WNT3A. Post-translationally, N-glycosylated; more than 90% of the glycans are sialylated. In terms of tissue distribution, detected in brain, especially on brain capillaries (at protein level). Expressed in isolated brain capillaries.

The protein resides in the secreted. In terms of biological role, functions as a carrier for hydrophobic molecules in body fluids. Essential for the solubility and activity of lipidated Wnt family members, including WNT1, WNT2B, WNT3, WNT3A, WNT5A, WNT7A, WNT7B, WNT8, WNT9A, WNT9B, WNT10A and WNT10B. Binds vitamin E. May transport vitamin E in body fluids under conditions where the lipoprotein system is not sufficient. May be involved in the transport of vitamin E across the blood-brain barrier. The sequence is that of Afamin (Afm) from Mus musculus (Mouse).